The chain runs to 499 residues: Serine/threonine protein phosphatase 2A 57 kDa regulatory subunit B' beta isoform (499 aa).

The segment covering 1–13 (MFKKIMKGGHRKP) has biased composition (basic residues). Residues 1-65 (MFKKIMKGGH…PVTATPPPPP (65 aa)) form a disordered region.

This sequence belongs to the phosphatase 2A regulatory subunit B56 family. PP2A consists of a common heteromeric enzyme, composed of a catalytic subunit (subunits C), a constant regulatory subunit (subunit A), and a variety of regulatory subunits such as subunits B (the R2/B/PR55/B55, R3/B''/PR72/PR130/PR59 and R5/B'/B56 families). Interacts with BZR1. Interacts with BRI1. Interacts with SRK2E/OST1. As to expression, expressed ubiquitously, higher levels in cotyledons and flowers.

It localises to the nucleus. Its subcellular location is the cytoplasm. Its function is as follows. The B regulatory subunit may modulate substrate selectivity and catalytic activity, and may also direct the localization of the catalytic enzyme to a particular subcellular compartment. Required for the formation of the PP2A holoenzyme that positively regulates brassinosteroid signaling by dephosphorylating and activating BZR1. The chain is Serine/threonine protein phosphatase 2A 57 kDa regulatory subunit B' beta isoform (B'BETA) from Arabidopsis thaliana (Mouse-ear cress).